The primary structure comprises 145 residues: MFIGTYNHSIDSKNRMLVPSKVKATLGEAIFVYLSLGFDGNIDMRLESEFNQFVNNINNLLIGSKEARNLTRLILSQTYKIEIDSASRILIPQNLIDKAKIKKDIYIIGTNDRYEIWAKEVYDDFSLNQESTLSDLAEKLLINGI.

2 consecutive SpoVT-AbrB domains span residues 5 to 49 (TYNH…LESE) and 78 to 121 (TYKI…AKEV).

The protein belongs to the MraZ family. Forms oligomers.

Its subcellular location is the cytoplasm. The protein localises to the nucleoid. The chain is Transcriptional regulator MraZ from Ureaplasma parvum serovar 3 (strain ATCC 27815 / 27 / NCTC 11736).